Consider the following 310-residue polypeptide: Pantothenate kinase (310 aa).

Position 95–102 (95–102 (GSVAVGKS)) interacts with ATP.

This sequence belongs to the prokaryotic pantothenate kinase family.

It is found in the cytoplasm. It carries out the reaction (R)-pantothenate + ATP = (R)-4'-phosphopantothenate + ADP + H(+). It participates in cofactor biosynthesis; coenzyme A biosynthesis; CoA from (R)-pantothenate: step 1/5. The chain is Pantothenate kinase from Rhodococcus erythropolis (strain PR4 / NBRC 100887).